The primary structure comprises 294 residues: Lipoyl synthase 1 (294 aa).

[4Fe-4S] cluster-binding residues include Cys-38, Cys-43, Cys-49, Cys-64, Cys-68, Cys-71, and Ser-279. In terms of domain architecture, Radical SAM core spans Phe-50–Leu-268.

Belongs to the radical SAM superfamily. Lipoyl synthase family. [4Fe-4S] cluster serves as cofactor.

It localises to the cytoplasm. The enzyme catalyses [[Fe-S] cluster scaffold protein carrying a second [4Fe-4S](2+) cluster] + N(6)-octanoyl-L-lysyl-[protein] + 2 oxidized [2Fe-2S]-[ferredoxin] + 2 S-adenosyl-L-methionine + 4 H(+) = [[Fe-S] cluster scaffold protein] + N(6)-[(R)-dihydrolipoyl]-L-lysyl-[protein] + 4 Fe(3+) + 2 hydrogen sulfide + 2 5'-deoxyadenosine + 2 L-methionine + 2 reduced [2Fe-2S]-[ferredoxin]. The protein operates within protein modification; protein lipoylation via endogenous pathway; protein N(6)-(lipoyl)lysine from octanoyl-[acyl-carrier-protein]: step 2/2. Catalyzes the radical-mediated insertion of two sulfur atoms into the C-6 and C-8 positions of the octanoyl moiety bound to the lipoyl domains of lipoate-dependent enzymes, thereby converting the octanoylated domains into lipoylated derivatives. The polypeptide is Lipoyl synthase 1 (Prochlorococcus marinus (strain SARG / CCMP1375 / SS120)).